Reading from the N-terminus, the 367-residue chain is uncharacterized protein (367 aa).

Residues 6–26 (IAAGVVVALAAVWCTSAWFTG) traverse the membrane as a helical segment.

This sequence to E.coli YdgA and YihF.

It localises to the membrane. This is an uncharacterized protein from Haemophilus influenzae (strain ATCC 51907 / DSM 11121 / KW20 / Rd).